Here is a 197-residue protein sequence, read N- to C-terminus: Tic20 family protein Ycf60 (197 aa).

A run of 5 helical transmembrane segments spans residues 3-23, 47-66, 81-101, 118-138, and 141-161; these read IIIA…GVGV, FGYY…PDVL, LVVV…MSYF, VSQA…LNAL, and MILM…LTMG.

It belongs to the Tic20 family.

It localises to the plastid. Its subcellular location is the chloroplast membrane. The sequence is that of Tic20 family protein Ycf60 (ycf60) from Cyanidioschyzon merolae (strain NIES-3377 / 10D) (Unicellular red alga).